Consider the following 156-residue polypeptide: Oxidized purine nucleoside triphosphate hydrolase (156 aa).

The region spanning 3–132 (TSRLYTLVLV…WFPLLLQKKK (130 aa)) is the Nudix hydrolase domain. Thr-8 lines the 2-oxo-dATP pocket. Lys-23 is a binding site for 8-oxo-dGTP. 2-oxo-dATP-binding positions include Asn-33 and 35 to 38 (FGGK). 5 residues coordinate Mg(2+): Gly-36, Glu-52, Glu-55, Glu-56, and Glu-100. Positions 37–58 (GKVQEGETIEDGAKRELREESG) match the Nudix box motif. A 2-oxo-dATP-binding site is contributed by 117–120 (WPDD).

It belongs to the Nudix hydrolase family. As to quaternary structure, monomer. Mg(2+) serves as cofactor.

The protein resides in the cytoplasm. Its subcellular location is the nucleus. It localises to the nucleus membrane. It is found in the cytoplasmic vesicle. The protein localises to the secretory vesicle. The protein resides in the acrosome. The catalysed reaction is 2-oxo-dATP + H2O = 2-oxo-dAMP + diphosphate + H(+). It carries out the reaction 2-oxo-ATP + H2O = 2-oxo-AMP + diphosphate + H(+). It catalyses the reaction 8-oxo-dGTP + H2O = 8-oxo-dGMP + diphosphate + H(+). The enzyme catalyses 8-oxo-dATP + H2O = 8-oxo-dAMP + diphosphate + H(+). The catalysed reaction is O(6)-methyl-dGTP + H2O = O(6)-methyl-dGMP + diphosphate + H(+). It carries out the reaction N(6)-methyl-dATP + H2O = N(6)-methyl-dAMP + diphosphate + H(+). It catalyses the reaction N(6)-methyl-ATP + H2O = N(6)-methyl-AMP + diphosphate + H(+). Oxidized purine nucleoside triphosphate hydrolase which is a prominent sanitizer of the oxidized nucleotide pool. Catalyzes the hydrolysis of 2-oxo-dATP (2-hydroxy-dATP) into 2-oxo-dAMP. Also has a significant hydrolase activity toward 2-oxo-ATP, 8-oxo-dGTP and 8-oxo-dATP. Through the hydrolysis of oxidized purine nucleoside triphosphates, prevents their incorporation into DNA and the subsequent transversions A:T to C:G and G:C to T:A. Also catalyzes the hydrolysis of methylated purine nucleoside triphosphate preventing their integration into DNA. Through this antimutagenic activity protects cells from oxidative stress. This is Oxidized purine nucleoside triphosphate hydrolase (NUDT1) from Canis lupus familiaris (Dog).